We begin with the raw amino-acid sequence, 337 residues long: Eukaryotic translation initiation factor 3 subunit H (337 aa).

The MPN domain maps to Val-21–Ala-153.

It belongs to the eIF-3 subunit H family. As to quaternary structure, component of the eukaryotic translation initiation factor 3 (eIF-3) complex. The eIF-3 complex interacts with pix. Interacts with mxt.

The protein localises to the cytoplasm. In terms of biological role, component of the eukaryotic translation initiation factor 3 (eIF-3) complex, which is involved in protein synthesis of a specialized repertoire of mRNAs and, together with other initiation factors, stimulates binding of mRNA and methionyl-tRNAi to the 40S ribosome. The eIF-3 complex specifically targets and initiates translation of a subset of mRNAs involved in cell proliferation. This chain is Eukaryotic translation initiation factor 3 subunit H, found in Drosophila virilis (Fruit fly).